The chain runs to 112 residues: Large ribosomal subunit protein eL33y (112 aa).

It belongs to the eukaryotic ribosomal protein eL33 family.

This chain is Large ribosomal subunit protein eL33y (RPL35AC), found in Arabidopsis thaliana (Mouse-ear cress).